The following is a 761-amino-acid chain: MTLSAWIILVTLAMASVLTPEDNVRLRRLTAYVANADASIVLLTYTEYEEGTNHGNSMLWRINDPLEAEYPFDPDDISLLNAERVCPELVGVGDLQYSTHNQAFYFTAQGPDGTSQVYSYNHKLETCTQISFLPISVSNLKVSPKGNSVLFSAEIFVYPNNHASVDDPLNFAHDEFARIQARPYKAFAYEQLYTRHWDEDILPSQYRHLFAARLERSSEYDDDYVRITVDNSIDLMPRFDGDCPMRPFADASSYTFDSHGRYVAFVTQVGSTAAFYTNDSIWITDLQQFLDAKKPVRDVVLPLRCATCWNKARDQRPAFSYDGIFLYYASMDEEQSESDLLRLRKQNVSDLFEYDCDSLFCGPVTGEGVFNLTAGVFDRSIGQFIIPTDSTEDSIYILAEDHARTNLFRYNEESSTVTRLTYNGTLGSLLYLRHNKIFLATMSSYTRPTDLVMLDLTVATEFTATRDPSDTMKDDLIKISYLTDLNRQRLRHIDELQEPEEFYLPSKSFPDQYVHSWYFAPANLRDSHEYPLILYVHGGPESPWANSWSYRWNPQLIAARGYGVLATNFHGSSSFGEVFQKSVRGNWYSYPLEDIMDAWSNIYTHADKAYLSREKVCAMGASFGATFMNYMNSHVNNVTCYVTHDGVFDTMCNALETDELFFPVRELGGFLLDEQVDNQQLYEKWNPARFVENMSAPMLVIHGQKDYRIQVYHGISLFQALRLRGIKTKLVYFPTQSHWVWQPQESLFWHTQVFDWLDTYL.

The first 15 residues, 1-15, serve as a signal peptide directing secretion; that stretch reads MTLSAWIILVTLAMA. Residues Ser622, Asp706, and His738 each act as charge relay system in the active site.

This sequence belongs to the peptidase S9C family.

The protein resides in the membrane. In terms of biological role, may be involved in metabolism of dipeptides or may affect host defense mechanisms. This Giardia intestinalis (Giardia lamblia) protein is Dipeptidyl-peptidase 4 (DPP).